We begin with the raw amino-acid sequence, 95 residues long: 1,2-phenylacetyl-CoA epoxidase, subunit B (95 aa).

As to quaternary structure, homotrimer. Forms a stable heterodimer with PaaC. Probably forms an oligomer with PaaAC.

The protein operates within aromatic compound metabolism; phenylacetate degradation. Component of 1,2-phenylacetyl-CoA epoxidase multicomponent enzyme system which catalyzes the reduction of phenylacetyl-CoA (PA-CoA) to form 1,2-epoxyphenylacetyl-CoA. The subunit B may play a regulatory role or be directly involved in electron transport. In Escherichia coli (strain K12), this protein is 1,2-phenylacetyl-CoA epoxidase, subunit B (paaB).